Consider the following 205-residue polypeptide: ATP-dependent Clp protease proteolytic subunit (205 aa).

Serine 109 functions as the Nucleophile in the catalytic mechanism. Histidine 134 is an active-site residue.

It belongs to the peptidase S14 family. Fourteen ClpP subunits assemble into 2 heptameric rings which stack back to back to give a disk-like structure with a central cavity, resembling the structure of eukaryotic proteasomes.

Its subcellular location is the cytoplasm. It carries out the reaction Hydrolysis of proteins to small peptides in the presence of ATP and magnesium. alpha-casein is the usual test substrate. In the absence of ATP, only oligopeptides shorter than five residues are hydrolyzed (such as succinyl-Leu-Tyr-|-NHMec, and Leu-Tyr-Leu-|-Tyr-Trp, in which cleavage of the -Tyr-|-Leu- and -Tyr-|-Trp bonds also occurs).. Its function is as follows. Cleaves peptides in various proteins in a process that requires ATP hydrolysis. Has a chymotrypsin-like activity. Plays a major role in the degradation of misfolded proteins. The sequence is that of ATP-dependent Clp protease proteolytic subunit from Baumannia cicadellinicola subsp. Homalodisca coagulata.